Here is a 281-residue protein sequence, read N- to C-terminus: Histidine biosynthesis bifunctional protein hisIE, chloroplastic (281 aa).

Residues 1–50 constitute a chloroplast transit peptide; the sequence is MAVSYNALAQSLARSSCFIPKPYSFRDTKLRSRSNVVFACNDNKNIALQA. A phosphoribosyl-AMP cyclohydrolase region spans residues 51 to 178; the sequence is KVDNLLDRIK…NKLALTTLYS (128 aa). A phosphoribosyl-ATP pyrophosphohydrolase region spans residues 179-281; the sequence is LESIISKRKE…GIEEKQNRTK (103 aa).

It in the N-terminal section; belongs to the PRA-CH family. In the C-terminal section; belongs to the PRA-PH family. In terms of tissue distribution, ubiquitously expressed throughout development.

Its subcellular location is the plastid. It localises to the chloroplast. It catalyses the reaction 1-(5-phospho-beta-D-ribosyl)-ATP + H2O = 1-(5-phospho-beta-D-ribosyl)-5'-AMP + diphosphate + H(+). The enzyme catalyses 1-(5-phospho-beta-D-ribosyl)-5'-AMP + H2O = 1-(5-phospho-beta-D-ribosyl)-5-[(5-phospho-beta-D-ribosylamino)methylideneamino]imidazole-4-carboxamide. It functions in the pathway amino-acid biosynthesis; L-histidine biosynthesis; L-histidine from 5-phospho-alpha-D-ribose 1-diphosphate: step 2/9. Its pathway is amino-acid biosynthesis; L-histidine biosynthesis; L-histidine from 5-phospho-alpha-D-ribose 1-diphosphate: step 3/9. In Arabidopsis thaliana (Mouse-ear cress), this protein is Histidine biosynthesis bifunctional protein hisIE, chloroplastic (HISN2).